We begin with the raw amino-acid sequence, 268 residues long: Nickel import ATP-binding protein NikE (268 aa).

The region spanning 4–252 (LNISGLSHHY…SSDAGRVLQN (249 aa)) is the ABC transporter domain. 45 to 52 (GRSGCGKS) provides a ligand contact to ATP.

Belongs to the ABC transporter superfamily. Nickel importer (TC 3.A.1.5.3) family. The complex is composed of two ATP-binding proteins (NikD and NikE), two transmembrane proteins (NikB and NikC) and a solute-binding protein (NikA).

The protein localises to the cell inner membrane. It catalyses the reaction Ni(2+)(out) + ATP + H2O = Ni(2+)(in) + ADP + phosphate + H(+). Part of the ABC transporter complex NikABCDE involved in nickel import. Responsible for energy coupling to the transport system. The sequence is that of Nickel import ATP-binding protein NikE from Escherichia coli (strain K12).